The following is an 82-amino-acid chain: Beta-insect depressant toxin LqqIT2 (82 aa).

Positions Met-1–Ala-21 are cleaved as a signal peptide. One can recognise an LCN-type CS-alpha/beta domain in the interval Asp-22 to Gly-82. 4 disulfides stabilise this stretch: Cys-31–Cys-81, Cys-35–Cys-56, Cys-42–Cys-63, and Cys-46–Cys-65.

This sequence belongs to the long (4 C-C) scorpion toxin superfamily. Sodium channel inhibitor family. Beta subfamily. Expressed by the venom gland.

The protein localises to the secreted. In terms of biological role, depressant insect beta-toxins cause a transient contraction paralysis followed by a slow flaccid paralysis. They bind voltage-independently at site-4 of sodium channels and shift the voltage of activation toward more negative potentials thereby affecting sodium channel activation and promoting spontaneous and repetitive firing. Aside from typical beta-toxin effects, this toxin also affects the inactivation process and ion selectivity of the insect voltage-gated sodium channel. This toxin is active only on insects. Is active on the insect voltage-gated sodium channel para. In vivo, when injected intraperitoneally, it exhibits analgesic activity, increasing hot plate and tail flick withdrawal latencies in a dose-dependent fashion. This phenomenon might be partly due to an inhibitory mechanism activated by noxious stimuli. This chain is Beta-insect depressant toxin LqqIT2, found in Leiurus quinquestriatus quinquestriatus (Egyptian scorpion).